We begin with the raw amino-acid sequence, 597 residues long: Arginine--tRNA ligase (597 aa).

A 'HIGH' region motif is present at residues 125–135 (PNTNKPLHLGH).

It belongs to the class-I aminoacyl-tRNA synthetase family. As to quaternary structure, monomer.

It is found in the cytoplasm. The catalysed reaction is tRNA(Arg) + L-arginine + ATP = L-arginyl-tRNA(Arg) + AMP + diphosphate. The polypeptide is Arginine--tRNA ligase (Porphyromonas gingivalis (strain ATCC 33277 / DSM 20709 / CIP 103683 / JCM 12257 / NCTC 11834 / 2561)).